The following is a 221-amino-acid chain: MAFRDQPLGELALTIPRASALFRKYNLDFCCGGKQTLLRAATRQALDLDVIESELAALAETPLEKDWQAAPLAEIIEHILVRYHDRHREQLPELILQATKVERVHADKPGVPKGLAKYLSLLHEELTSHMMKEERVLFPMIKQGMGSQAAGPVSVMESEHDEAGELLEVIKHTTNNVTPPPEACTTWRALYNGINELIDDLMNHISLENNTLFPRALAGEK.

Belongs to the RIC family. YtfE subfamily. As to quaternary structure, homodimer.

The protein resides in the cytoplasm. Functionally, di-iron-containing protein involved in the repair of iron-sulfur clusters damaged by oxidative and nitrosative stress conditions. The sequence is that of Iron-sulfur cluster repair protein YtfE from Cronobacter sakazakii (strain ATCC BAA-894) (Enterobacter sakazakii).